Consider the following 376-residue polypeptide: 26S proteasome non-ATPase regulatory subunit 13 (376 aa).

Residues 171-338 (SYYKDALRFL…KRVHMTWVQP (168 aa)) form the PCI domain.

It belongs to the proteasome subunit S11 family. In terms of assembly, component of the 19S proteasome regulatory particle complex. The 26S proteasome consists of a 20S core particle (CP) and two 19S regulatory subunits (RP). The regulatory particle is made of a lid composed of 9 subunits including PSMD13, a base containing 6 ATPases and few additional components.

Component of the 26S proteasome, a multiprotein complex involved in the ATP-dependent degradation of ubiquitinated proteins. This complex plays a key role in the maintenance of protein homeostasis by removing misfolded or damaged proteins, which could impair cellular functions, and by removing proteins whose functions are no longer required. Therefore, the proteasome participates in numerous cellular processes, including cell cycle progression, apoptosis, or DNA damage repair. This is 26S proteasome non-ATPase regulatory subunit 13 (PSMD13) from Bos taurus (Bovine).